A 465-amino-acid polypeptide reads, in one-letter code: Glutamate--tRNA ligase (465 aa).

The 'HIGH' region motif lies at 5–15; that stretch reads PSPTGMFHVGG. Residues Cys-96, Cys-98, Cys-118, and Asp-120 each coordinate Zn(2+). A 'KMSKS' region motif is present at residues 228-232; that stretch reads KLSKR. Lys-231 is an ATP binding site.

This sequence belongs to the class-I aminoacyl-tRNA synthetase family. Glutamate--tRNA ligase type 1 subfamily. In terms of assembly, monomer. Requires Zn(2+) as cofactor.

The protein resides in the cytoplasm. The enzyme catalyses tRNA(Glu) + L-glutamate + ATP = L-glutamyl-tRNA(Glu) + AMP + diphosphate. Its function is as follows. Catalyzes the attachment of glutamate to tRNA(Glu) in a two-step reaction: glutamate is first activated by ATP to form Glu-AMP and then transferred to the acceptor end of tRNA(Glu). This chain is Glutamate--tRNA ligase, found in Salinispora tropica (strain ATCC BAA-916 / DSM 44818 / JCM 13857 / NBRC 105044 / CNB-440).